Reading from the N-terminus, the 51-residue chain is Basic phospholipase A2 homolog BmatTX-I (51 aa).

Residues cysteine 28 and cysteine 44 are joined by a disulfide bond.

As to quaternary structure, monomer. As to expression, expressed by the venom gland.

The protein localises to the secreted. Functionally, snake venom phospholipase A2 homolog that lacks enzymatic activity. Shows high myotoxic activity, neutrophile activation (demonstrated by activation induction of IL-1beta production), slight cytotoxicity against Jurkat (leukemia T) and SK-BR-3 (breast adenocarcinoma) tumor cell lines, and slight antiparasitic activity against promastigote forms of Leishmania amazonensis. A model of myotoxic mechanism has been proposed: an apo Lys49-PLA2 is activated by the entrance of a hydrophobic molecule (e.g. fatty acid) at the hydrophobic channel of the protein leading to a reorientation of a monomer. This reorientation causes a transition between 'inactive' to 'active' states, causing alignment of C-terminal and membrane-docking sites (MDoS) side-by-side and putting the membrane-disruption sites (MDiS) in the same plane, exposed to solvent and in a symmetric position for both monomers. The MDoS region stabilizes the toxin on membrane by the interaction of charged residues with phospholipid head groups. Subsequently, the MDiS region destabilizes the membrane with penetration of hydrophobic residues. This insertion causes a disorganization of the membrane, allowing an uncontrolled influx of ions (i.e. calcium and sodium), and eventually triggering irreversible intracellular alterations and cell death. The chain is Basic phospholipase A2 homolog BmatTX-I from Bothrops mattogrossensis (Pitviper).